The sequence spans 284 residues: 4-diphosphocytidyl-2-C-methyl-D-erythritol kinase (284 aa).

Lys14 is a catalytic residue. Position 98 to 108 (98 to 108 (PMGGGLGGGSS)) interacts with ATP. Residue Asp140 is part of the active site.

This sequence belongs to the GHMP kinase family. IspE subfamily.

The catalysed reaction is 4-CDP-2-C-methyl-D-erythritol + ATP = 4-CDP-2-C-methyl-D-erythritol 2-phosphate + ADP + H(+). It functions in the pathway isoprenoid biosynthesis; isopentenyl diphosphate biosynthesis via DXP pathway; isopentenyl diphosphate from 1-deoxy-D-xylulose 5-phosphate: step 3/6. Its function is as follows. Catalyzes the phosphorylation of the position 2 hydroxy group of 4-diphosphocytidyl-2C-methyl-D-erythritol. This chain is 4-diphosphocytidyl-2-C-methyl-D-erythritol kinase, found in Shewanella putrefaciens (strain CN-32 / ATCC BAA-453).